A 168-amino-acid chain; its full sequence is MFKKLLLSVGLVWCLISLGQARKESTVEECEKNIGDSLKDRVCELRQYTPVSSDDMDKHMQCVLEVVGFVDGNGEVKESVLLELLQRVDSGVNHAANMKKCVTEASTSGSDKKANTFYTCFLGTSSLAGFKNAVDYNELLKAGKMQTSDPFDMNRVAALIKEIDDGLC.

The signal sequence occupies residues 1 to 21 (MFKKLLLSVGLVWCLISLGQA). Intrachain disulfides connect cysteine 30-cysteine 62, cysteine 43-cysteine 168, and cysteine 101-cysteine 120. Glutamate 31 and arginine 46 together coordinate noradrenaline. Glutamate 31 is a binding site for serotonin. Serotonin contacts are provided by histidine 59, tyrosine 118, aspartate 135, and glutamate 138. Residues tyrosine 118, aspartate 135, and glutamate 138 each contribute to the histamine site. Aspartate 135 and glutamate 138 together coordinate noradrenaline.

Belongs to the PBP/GOBP family. As to expression, female saliva (at protein level). Female salivary gland. Not detected in female carcass without salivary glands. Not detected in male tissues.

Its subcellular location is the secreted. Functionally, modulates blood feeding of female mosquitoes on vertebrate species by binding and sequestering different mediators involved in the host response. Binds serotonin, noradrenaline, histamine and adrenaline. Inhibits histamine-, serotonin- and noradrenaline-induced smooth muscle contraction. Exhibits vasodilating activity. This chain is Short form salivary protein D7R2, found in Anopheles gambiae (African malaria mosquito).